Reading from the N-terminus, the 166-residue chain is Ribonuclease H (166 aa).

One can recognise an RNase H type-1 domain in the interval 10–151; the sequence is KRVRVDMFTD…ADELARRGTS (142 aa). Positions 19, 57, 79, and 143 each coordinate Mg(2+). A compositionally biased stretch (basic and acidic residues) spans 145 to 157; the sequence is LARRGTSEARQGK. A disordered region spans residues 145–166; that stretch reads LARRGTSEARQGKVDGQSSTIL.

The protein belongs to the RNase H family. Monomer. It depends on Mg(2+) as a cofactor.

The protein resides in the cytoplasm. The enzyme catalyses Endonucleolytic cleavage to 5'-phosphomonoester.. In terms of biological role, endonuclease that specifically degrades the RNA of RNA-DNA hybrids. The protein is Ribonuclease H of Rhodospirillum rubrum (strain ATCC 11170 / ATH 1.1.1 / DSM 467 / LMG 4362 / NCIMB 8255 / S1).